Reading from the N-terminus, the 290-residue chain is Arginine and glutamate-rich protein 1 (290 aa).

Positions 1-10 (MGSRSRTPSP) are enriched in polar residues. 3 disordered regions span residues 1-137 (MGSR…AKEL), 193-216 (ERRREQIREEERRREEDEKQKREE), and 249-290 (MDEE…PGAL). Basic residues predominate over residues 12 to 28 (GKRRHHKSKHKKRSKSH). 2 stretches are compositionally biased toward basic and acidic residues: residues 29-44 (HDHERPSTRTDRDKSS) and 53-76 (RERDRDRERDRHRSDRHTERDYRH). 2 positions are modified to phosphoserine: serine 77 and serine 79. Residues 88 to 99 (SSSSSDSQYSEQ) are compositionally biased toward low complexity. Residues 111–269 (FKKLDEQNQM…QEKRVKEEQK (159 aa)) are a coiled coil. Over residues 124-137 (RLAEMERQRRAKEL) the composition is skewed to basic and acidic residues. Positions 249–269 (MDEERQRMRKEQEKRVKEEQK) are enriched in basic and acidic residues.

This sequence belongs to the ARGLU1 family. In terms of assembly, associates with the U1-snRNP complex; the interaction is enhanced by binding of Arglu1 to a stable intronic sequence RNA (sisRNA) produced from the Arglu1 gene by premature cleavage.

It is found in the nucleus. The protein localises to the nucleus speckle. Post-transcriptional regulator of gene expression; modulates splicing and premature cleavage at cryptic polyadenylation sites of its own pre-mRNA through binding and regulation of the U1-snRNP complex. The protein is Arginine and glutamate-rich protein 1 of Drosophila melanogaster (Fruit fly).